Consider the following 244-residue polypeptide: U11/U12 small nuclear ribonucleoprotein 35 kDa protein (244 aa).

The RRM domain occupies 51–129; sequence LTLFVARLNS…HEIFVDYELE (79 aa). Over residues 146–162 the composition is skewed to basic and acidic residues; sequence GKKESGQLRFGGRDRPF. A disordered region spans residues 146–244; sequence GKKESGQLRF…KTRDKRDRSK (99 aa). Lys172 is covalently cross-linked (Glycyl lysine isopeptide (Lys-Gly) (interchain with G-Cter in SUMO2)). Composition is skewed to basic and acidic residues over residues 173–185 and 192–244; these read NEPHREGKRERRE and RHWD…DRSK.

As to quaternary structure, component of the U11/U12 snRNPs that are part of the U12-type spliceosome.

Its subcellular location is the nucleus. This is U11/U12 small nuclear ribonucleoprotein 35 kDa protein (Snrnp35) from Rattus norvegicus (Rat).